Consider the following 96-residue polypeptide: Large ribosomal subunit protein uL23 (96 aa).

It belongs to the universal ribosomal protein uL23 family. As to quaternary structure, part of the 50S ribosomal subunit. Contacts protein L29, and trigger factor when it is bound to the ribosome.

One of the early assembly proteins it binds 23S rRNA. One of the proteins that surrounds the polypeptide exit tunnel on the outside of the ribosome. Forms the main docking site for trigger factor binding to the ribosome. The chain is Large ribosomal subunit protein uL23 from Ruthia magnifica subsp. Calyptogena magnifica.